The sequence spans 839 residues: LPS-assembly protein LptD (839 aa).

The signal sequence occupies residues 1–21; that stretch reads MAIGITACVLSLINYQGLAYS.

This sequence belongs to the LptD family. Component of the lipopolysaccharide transport and assembly complex. Interacts with LptE and LptA.

The protein resides in the cell outer membrane. Together with LptE, is involved in the assembly of lipopolysaccharide (LPS) at the surface of the outer membrane. This Legionella pneumophila (strain Lens) protein is LPS-assembly protein LptD.